The chain runs to 729 residues: Catalase-peroxidase (729 aa).

The interval 1–20 is disordered; that stretch reads MHNGSNGSVEQRDSMPETSR. Positions 10-20 are enriched in basic and acidic residues; sequence EQRDSMPETSR. The segment at residues 91–214 is a cross-link (tryptophyl-tyrosyl-methioninium (Trp-Tyr) (with M-240)); that stretch reads WHAAGTYRTT…LGATVMGLIY (124 aa). His92 (proton acceptor) is an active-site residue. The segment at residues 214-240 is a cross-link (tryptophyl-tyrosyl-methioninium (Tyr-Met) (with W-91)); sequence YVNPEGPESTPDPEWSAQRIRKSFGRM. His255 contacts heme b.

This sequence belongs to the peroxidase family. Peroxidase/catalase subfamily. As to quaternary structure, homodimer or homotetramer. It depends on heme b as a cofactor. In terms of processing, formation of the three residue Trp-Tyr-Met cross-link is important for the catalase, but not the peroxidase activity of the enzyme.

It catalyses the reaction H2O2 + AH2 = A + 2 H2O. The enzyme catalyses 2 H2O2 = O2 + 2 H2O. Bifunctional enzyme with both catalase and broad-spectrum peroxidase activity. In Salinibacter ruber (strain DSM 13855 / M31), this protein is Catalase-peroxidase.